A 231-amino-acid polypeptide reads, in one-letter code: MKQYNDLFKIIHREGYIFIASFALVSFLLASFNEKLGCIGCIATAWCIYFFRNPDRFVPISDDLVISPADGIIQEIKEALPPPELGLGDVEMIRVSIFLNLFNVHVNRIPANGKILALHYNPGKFFNASLDKASIYNERQSVLMEMAQGQKIVFVQIAGLIARRIVCDLEEGNEVKTGERYGIIRFGSRVDVYLPLKTALLVSKGQTAIGGETIIADFGRKKTTEFKFERK.

The active-site Schiff-base intermediate with substrate; via pyruvic acid is Ser188. The residue at position 188 (Ser188) is a Pyruvic acid (Ser); by autocatalysis.

Belongs to the phosphatidylserine decarboxylase family. PSD-A subfamily. In terms of assembly, heterodimer of a large membrane-associated beta subunit and a small pyruvoyl-containing alpha subunit. Pyruvate is required as a cofactor. Post-translationally, is synthesized initially as an inactive proenzyme. Formation of the active enzyme involves a self-maturation process in which the active site pyruvoyl group is generated from an internal serine residue via an autocatalytic post-translational modification. Two non-identical subunits are generated from the proenzyme in this reaction, and the pyruvate is formed at the N-terminus of the alpha chain, which is derived from the carboxyl end of the proenzyme. The post-translation cleavage follows an unusual pathway, termed non-hydrolytic serinolysis, in which the side chain hydroxyl group of the serine supplies its oxygen atom to form the C-terminus of the beta chain, while the remainder of the serine residue undergoes an oxidative deamination to produce ammonia and the pyruvoyl prosthetic group on the alpha chain.

It is found in the cell membrane. The catalysed reaction is a 1,2-diacyl-sn-glycero-3-phospho-L-serine + H(+) = a 1,2-diacyl-sn-glycero-3-phosphoethanolamine + CO2. It participates in phospholipid metabolism; phosphatidylethanolamine biosynthesis; phosphatidylethanolamine from CDP-diacylglycerol: step 2/2. Functionally, catalyzes the formation of phosphatidylethanolamine (PtdEtn) from phosphatidylserine (PtdSer). In Rickettsia rickettsii (strain Iowa), this protein is Phosphatidylserine decarboxylase proenzyme.